We begin with the raw amino-acid sequence, 208 residues long: Large ribosomal subunit protein uL3 (208 aa).

Positions 116–148 (GFQGVIKRHGQSRGPMAHGSRYHRRPGSMGPVA) are disordered.

This sequence belongs to the universal ribosomal protein uL3 family. As to quaternary structure, part of the 50S ribosomal subunit. Forms a cluster with proteins L14 and L19.

In terms of biological role, one of the primary rRNA binding proteins, it binds directly near the 3'-end of the 23S rRNA, where it nucleates assembly of the 50S subunit. The sequence is that of Large ribosomal subunit protein uL3 from Streptococcus pyogenes serotype M12 (strain MGAS2096).